Consider the following 261-residue polypeptide: DNA repair protein RecO (261 aa).

Belongs to the RecO family.

Involved in DNA repair and RecF pathway recombination. The polypeptide is DNA repair protein RecO (Limosilactobacillus reuteri (strain DSM 20016) (Lactobacillus reuteri)).